Here is a 914-residue protein sequence, read N- to C-terminus: MPLKLDIKRRLTSRSDRVKCVDLHPAEPWMLCALYNGHVHIMNYENQQMVKDFEVCDVPVRSARFVARKNWILTGSDDMQIRVFNYNTLEKVHSFEAHSDYLRCIAVHPTQPLVLTSSDDMLIKLWNWEKMWACQRVFEGHTHYVMQIVFNPKDNNTFASASLDRTVKVWQLGSNFANFTLEGHEKGVNCVDYYHGGDKPYLISGADDRLVKIWDYQNKTCVQTLEGHAQNISAVCFHPELPIVLTGSEDGTVRIWHSGTYRLETCLNYGFERVWTISSMRGTNNVALGYDEGSIIIKVGREEPAMSMDVVGSKIIWAKHSEMQQVNLKTIADGTEIKDGERLPVATKDMGACEIYPQTIAHNPNGRFVVVCGDGEYIIYTSMALRNKAFGSAQEFVWALESNEYAIRENNGTVRLFRNFKERKSFTPEYGAESIYGGYYFGVKTSSGLAFYDWETLQLVRRIEVQPKNVFWNESGSLVCLATDDSYFVLGVDTAQVANAVETKEGLEDDGVESAFNVLGEVSECVKTGLWVGDCFIYTNSVNRINYYVGGEIVTVSHLDRTMYLLGYVPKDNRIYLGDKELNVISFCLQLSVLEYQTAVMRRDFERADVVLPTIPKEHRTRVAHFLEKQGFKSQALQVSTDADHKFDLALQIGDLEIALKLARESENSQKWSQLADVASSKNNMSLVKECMQKANDLSGLLLLSTASGDAQLLEVVGAAGSAQGHHNLAFLSAFLRSDVERCLEILIETNRLPEAAFFARTYLPSQMSRIVELWREKLGKVNEKAGQSLADPAQYTNLFPGLGDALRVEQHLQEERARKAPARLAANLPLNSERHPLQELFAAEQGAAGQHLEEKVKPAYVPAQAVVSSSQVAEPTSAADDDDDLDLEIDGITLDDNIDTTDVNLDDDFLSDD.

WD repeat units follow at residues 13–54, 55–94, 97–136, 140–180, 183–224, 227–266, and 352–390; these read SRSD…KDFE, VCDVPVRSARFVARKNWILTGSDDMQIRVFNYNTLEKVHS, AHSDYLRCIAVHPTQPLVLTSSDDMLIKLWNWEKMWACQR, GHTH…ANFT, GHEK…CVQT, GHAQNISAVCFHPELPIVLTGSEDGTVRIWHSGTYRLETC, and ACEIYPQTIAHNPNGRFVVVCGDGEYIIYTSMALRNKAF.

It belongs to the WD repeat COPB2 family. Oligomeric complex that consists of at least the alpha, beta, beta', gamma, delta, epsilon and zeta subunits.

It localises to the cytoplasm. Its subcellular location is the golgi apparatus membrane. It is found in the cytoplasmic vesicle. The protein localises to the COPI-coated vesicle membrane. In terms of biological role, the coatomer is a cytosolic protein complex that binds to dilysine motifs and reversibly associates with Golgi non-clathrin-coated vesicles, which further mediate biosynthetic protein transport from the ER, via the Golgi up to the trans Golgi network. Coatomer complex is required for budding from Golgi membranes, and is essential for the retrograde Golgi-to-ER transport of dilysine-tagged proteins. The chain is Coatomer subunit beta' from Drosophila melanogaster (Fruit fly).